We begin with the raw amino-acid sequence, 413 residues long: Protein LAZY 1 (413 aa).

The chain crosses the membrane as a helical span at residues 71 to 91 (FTFGGSGLLTIGTLGIAAVAV). Acidic residues predominate over residues 103–124 (DADADSDFDDNDDTAGDDEDQV). 2 disordered regions span residues 103 to 127 (DADA…VDSA) and 261 to 308 (EDGG…ASAT). Short sequence motifs (nuclear localization signal) lie at residues 275-298 (RKAG…EKVP) and 338-345 (KKSRKRGS).

It belongs to the LAZY family. As to expression, expressed in the node of the stem, initiating leaf founder cells, young leaf primordia, tips of axillary meristems, spikelet pair meristems of developing tassels and ears, male flower primordia, tassels, ears, silks and seeds. Expressed in leaf sheaths, leaf pulvinus and shoot apical meristem (SAM).

It localises to the cell membrane. The protein localises to the nucleus. Its function is as follows. Involved in the regulation of shoot gravitropism, and tassel and ear development through the regulation of polar auxin transport (PAT) and auxin signaling. Acts as a negative regulator of basipetal PAT, but positive regulator of lateral auxin transport. Involved in the regulation of shoot gravitropism and leaf angle through the regulation of cell development. The chain is Protein LAZY 1 from Zea mays (Maize).